The following is a 147-amino-acid chain: Large ribosomal subunit protein bL21 (147 aa).

A disordered region spans residues 125-147 (EEVEAAPKAKKAAPKAKKEATKE).

Belongs to the bacterial ribosomal protein bL21 family. In terms of assembly, part of the 50S ribosomal subunit. Contacts protein L20.

Functionally, this protein binds to 23S rRNA in the presence of protein L20. This Flavobacterium johnsoniae (strain ATCC 17061 / DSM 2064 / JCM 8514 / BCRC 14874 / CCUG 350202 / NBRC 14942 / NCIMB 11054 / UW101) (Cytophaga johnsonae) protein is Large ribosomal subunit protein bL21.